A 78-amino-acid polypeptide reads, in one-letter code: Large ribosomal subunit protein bL28 (78 aa).

The disordered stretch occupies residues 1 to 23; the sequence is MSRVCQVSGKRVQTGNNVSHANN. A compositionally biased stretch (polar residues) spans 11-22; it reads RVQTGNNVSHAN.

It belongs to the bacterial ribosomal protein bL28 family.

In Stenotrophomonas maltophilia (strain R551-3), this protein is Large ribosomal subunit protein bL28.